The chain runs to 410 residues: Tyrosine--tRNA ligase (410 aa).

Residue Y36 participates in L-tyrosine binding. The short motif at 41-50 (ATADSLTAGH) is the 'HIGH' region element. The L-tyrosine site is built by Y169 and Q173. The 'KMSKS' region signature appears at 229-233 (KMGKT). K232 provides a ligand contact to ATP. Residues 343-409 (IDLITMMIDA…GKKAYHLFRA (67 aa)) enclose the S4 RNA-binding domain.

This sequence belongs to the class-I aminoacyl-tRNA synthetase family. TyrS type 1 subfamily. As to quaternary structure, homodimer.

Its subcellular location is the cytoplasm. The enzyme catalyses tRNA(Tyr) + L-tyrosine + ATP = L-tyrosyl-tRNA(Tyr) + AMP + diphosphate + H(+). Functionally, catalyzes the attachment of tyrosine to tRNA(Tyr) in a two-step reaction: tyrosine is first activated by ATP to form Tyr-AMP and then transferred to the acceptor end of tRNA(Tyr). This is Tyrosine--tRNA ligase from Lachnoclostridium phytofermentans (strain ATCC 700394 / DSM 18823 / ISDg) (Clostridium phytofermentans).